A 360-amino-acid polypeptide reads, in one-letter code: Peptide chain release factor 1 (360 aa).

N5-methylglutamine is present on Q235. A compositionally biased stretch (basic and acidic residues) spans 283–293 (EREAQAKEASA). Residues 283–305 (EREAQAKEASARKSLIGSGDRSD) form a disordered region.

This sequence belongs to the prokaryotic/mitochondrial release factor family. In terms of processing, methylated by PrmC. Methylation increases the termination efficiency of RF1.

Its subcellular location is the cytoplasm. Peptide chain release factor 1 directs the termination of translation in response to the peptide chain termination codons UAG and UAA. The chain is Peptide chain release factor 1 from Ralstonia pickettii (strain 12J).